A 405-amino-acid polypeptide reads, in one-letter code: Macrolide efflux protein A (405 aa).

11 consecutive transmembrane segments (helical) span residues 14-34 (IWAGQAVSLITSAILQMAIIF), 48-68 (MASLLGFLPYAVFGPAIGVLV), 76-98 (IMIGADLIIAAAGSVLTIVAFYM), 145-165 (SLQSISYIVSPAVAALLYSVW), 168-188 (NAIIAIDVLGAVIASITVAIV), 222-242 (FALLLVGTLYMFVYMPINALF), 259-279 (ITEISFASGMLIGGLLLGLFG), 285-305 (ILLITASIFMMGISLTISGLL), 310-330 (FFIFVVCCAIMGLSVPFYSGV), 350-370 (LTGSIMSLAMPIGLILSALFA), and 373-393 (IGVNHWFLLSGTLIICIAIVC).

It belongs to the major facilitator superfamily. Drug:H(+) antiporter-3 (DHA3) (TC 2.A.1.21) family.

The protein localises to the cell membrane. In terms of biological role, confers resistance to 14-membered macrolides including erythromycin and to 15-membered macrolides but not to 16-membered macrolides, lincosamides or analogs of streptogramin B. May function as an efflux pump to regulate intracellular macrolide levels. The chain is Macrolide efflux protein A from Streptococcus pyogenes serotype M6 (strain ATCC BAA-946 / MGAS10394).